Here is a 939-residue protein sequence, read N- to C-terminus: Collagen-like protein 3 (939 aa).

N-linked (GlcNAc...) asparagine; by host glycosylation is found at Asn-15, Asn-35, Asn-39, and Asn-82. Residues 84 to 95 show a composition bias toward low complexity; sequence SGSSGPSGPQGP. Disordered regions lie at residues 84 to 332 and 358 to 697; these read SGSS…DLGN and SIKG…KGEA. 8 Collagen-like domains span residues 88-147, 148-207, 211-330, 364-423, 427-486, 493-552, 564-622, and 638-697; these read GPSG…NGDK, GNKG…KGDK, GNKG…SPDL, GDKG…SGAD, GDKG…KGEK, GESG…KGSK, GDKG…KGDV, and GDKG…KGEA. 13 stretches are compositionally biased toward basic and acidic residues: residues 96-110, 123-182, 189-230, 237-260, 267-288, 297-314, 360-371, 378-416, 423-491, 498-527, 537-552, 560-580, and 589-684; these read KGEK…DKGE, DADK…DPGI, DADK…DIGL, DADK…DIGP, DADK…KGTK, KGDK…DKGE, KGDKGDKGDTGL, DADK…DTGL, DADK…DVGI, DADK…DTGI, KGDK…KGSK, KGDK…DIGI, and KGDK…DKGD. N-linked (GlcNAc...) asparagine; by host glycosylation is found at Asn-788, Asn-820, Asn-858, Asn-919, and Asn-925. The interval 896 to 923 is disordered; sequence NGETGAPTTDSGTNYGAGGGGGGNGTQG. Over residues 910–923 the composition is skewed to gly residues; that stretch reads YGAGGGGGGNGTQG.

In terms of processing, may be hydroxylated on lysine by the viral-encoded procollagen-lysine,2-oxoglutarate 5-dioxygenase.

It localises to the virion. Functionally, may participate in the formation of a layer of cross-linked glycosylated fibrils at the viral surface thus giving it a hairy-like appearance. This chain is Collagen-like protein 3, found in Acanthamoeba polyphaga (Amoeba).